The following is a 461-amino-acid chain: Ribosomal protein uS12 methylthiotransferase RimO (461 aa).

The 116-residue stretch at 9–124 (PRIGMVSLGC…VMDAVHLNLP (116 aa)) folds into the MTTase N-terminal domain. Cysteine 18, cysteine 54, cysteine 83, cysteine 159, cysteine 163, and cysteine 166 together coordinate [4Fe-4S] cluster. A Radical SAM core domain is found at 145-387 (LTPRHYAYLK…AVAEAVSSQK (243 aa)). One can recognise a TRAM domain in the interval 389-461 (QQRVGATMQV…QGHDLIAVPV (73 aa)).

The protein belongs to the methylthiotransferase family. RimO subfamily. [4Fe-4S] cluster serves as cofactor.

The protein resides in the cytoplasm. The catalysed reaction is L-aspartate(89)-[ribosomal protein uS12]-hydrogen + (sulfur carrier)-SH + AH2 + 2 S-adenosyl-L-methionine = 3-methylsulfanyl-L-aspartate(89)-[ribosomal protein uS12]-hydrogen + (sulfur carrier)-H + 5'-deoxyadenosine + L-methionine + A + S-adenosyl-L-homocysteine + 2 H(+). Catalyzes the methylthiolation of an aspartic acid residue of ribosomal protein uS12. This Polaromonas naphthalenivorans (strain CJ2) protein is Ribosomal protein uS12 methylthiotransferase RimO.